The primary structure comprises 112 residues: 2Fe-2S ferredoxin (112 aa).

One can recognise a 2Fe-2S ferredoxin-type domain in the interval 5–107 (IKVTFIINDE…GIKVRLPSAT (103 aa)). 4 residues coordinate [2Fe-2S] cluster: C42, C48, C51, and C88.

It belongs to the adrenodoxin/putidaredoxin family. [2Fe-2S] cluster is required as a cofactor.

Ferredoxin are iron-sulfur proteins that transfer electrons in a wide variety of metabolic reactions. This is 2Fe-2S ferredoxin (fdxB) from Rickettsia prowazekii (strain Madrid E).